We begin with the raw amino-acid sequence, 163 residues long: Secretory-abundant heat soluble protein 53582 (163 aa).

An N-terminal signal peptide occupies residues M1 to A19. The segment at E22–P51 is SAHS-c1. The SAHS-c2 stretch occupies residues Y67–E95. Residues K108 to R157 form an SAHS-c3 region.

It belongs to the Secretory-abundant heat soluble protein (SAHS) family.

The protein resides in the secreted. Secreted heat soluble protein acting as a molecular shield in water-deficient condition. Tardigrade-specific intrinsically disordered proteins (TDPs) are essential for desiccation tolerance by forming non-crystalline amorphous solids upon desiccation, and this vitrified state mirrors their protective capabilities. This Hypsibius exemplaris (Freshwater tardigrade) protein is Secretory-abundant heat soluble protein 53582.